Consider the following 438-residue polypeptide: DEAD-box ATP-dependent RNA helicase CshB (438 aa).

Positions 4-32 (TKFELYELKPFIIDAVHRLGFYEPTDIQK) match the Q motif motif. In terms of domain architecture, Helicase ATP-binding spans 35 to 208 (IPAVLKKESV…KKYMENPKYA (174 aa)). Residue 48–55 (SQTGTGKT) participates in ATP binding. The DEAD box signature appears at 156–159 (DEAD). A Helicase C-terminal domain is found at 235–385 (LLFDIMSHLN…EWKKGDDRQR (151 aa)). Positions 380-438 (GDDRQRRKKRKKTPNEADEIAHRLVKKPKKVKPGYKKKMSYEMEKIKKKQRRNQSKKRK) are disordered. Positions 392–401 (TPNEADEIAH) are enriched in basic and acidic residues. Composition is skewed to basic residues over residues 402 to 417 (RLVK…YKKK) and 425 to 438 (IKKK…KKRK).

The protein belongs to the DEAD box helicase family. As to quaternary structure, interacts with CspB when cells are transcriptionally active. May interact with RNA helicases CshA and DbpA (DeaD), may be a component of a possible RNA degradosome complex composed of rny, rnja, rnjb, pnp, pfkA and eno (although rnjA and rnjB's presence is unclear). Specifically interacts with pnp and rny.

It is found in the cytoplasm. The protein resides in the nucleoid. The enzyme catalyses ATP + H2O = ADP + phosphate + H(+). In terms of biological role, DEAD-box RNA helicase that plays a role in 70S ribosome assembly. May work in conjunction with the cold shock proteins to ensure proper initiation of transcription at low and optimal temperatures. This Bacillus subtilis (strain 168) protein is DEAD-box ATP-dependent RNA helicase CshB.